A 515-amino-acid chain; its full sequence is RNA-splicing ligase RtcB homolog (515 aa).

Mn(2+)-binding residues include D121, C124, H229, H269, and H363. Residue 228–232 (NHYGE) participates in GMP binding. GMP contacts are provided by residues 363–364 (HN), 412–415 (GGTM), S419, 438–441 (HGSG), and K514. The GMP-histidine intermediate role is filled by H438.

Belongs to the RtcB family. In terms of assembly, catalytic component of the tRNA-splicing ligase complex. The cofactor is Mn(2+).

The enzyme catalyses a 3'-end 3'-phospho-ribonucleotide-RNA + a 5'-end dephospho-ribonucleoside-RNA + GTP = a ribonucleotidyl-ribonucleotide-RNA + GMP + diphosphate. It catalyses the reaction a 3'-end 2',3'-cyclophospho-ribonucleotide-RNA + a 5'-end dephospho-ribonucleoside-RNA + GTP + H2O = a ribonucleotidyl-ribonucleotide-RNA + GMP + diphosphate + H(+). Catalytic subunit of the tRNA-splicing ligase complex that acts by directly joining spliced tRNA halves to mature-sized tRNAs by incorporating the precursor-derived splice junction phosphate into the mature tRNA as a canonical 3',5'-phosphodiester. May act as an RNA ligase with broad substrate specificity, and may function toward other RNAs. This chain is RNA-splicing ligase RtcB homolog, found in Theileria annulata.